Consider the following 119-residue polypeptide: MTGTGKTVTRVDLCEAVYQKVGLSRTESSAFVELVLKEITDCLERGETVKLSSFGSFMVRKKGQRIGRNPKTGTEVPISPRRVMVFKPSAILKQRINGQQGSGKMNGEASHEQLSAEPE.

Residues 96–119 (INGQQGSGKMNGEASHEQLSAEPE) are disordered.

Belongs to the bacterial histone-like protein family. Heterodimer of an alpha and a beta chain.

Its function is as follows. This protein is one of the two subunits of integration host factor, a specific DNA-binding protein that functions in genetic recombination as well as in transcriptional and translational control. In Bradyrhizobium sp. (strain BTAi1 / ATCC BAA-1182), this protein is Integration host factor subunit alpha.